A 459-amino-acid chain; its full sequence is Cysteine--tRNA ligase (459 aa).

Residue C31 participates in Zn(2+) binding. A 'HIGH' region motif is present at residues 33-43 (PTVYYNPHIGN). 3 residues coordinate Zn(2+): C216, H241, and E245. Positions 274–278 (KMSKS) match the 'KMSKS' region motif. Residue K277 participates in ATP binding.

Belongs to the class-I aminoacyl-tRNA synthetase family. Monomer. The cofactor is Zn(2+).

It is found in the cytoplasm. The catalysed reaction is tRNA(Cys) + L-cysteine + ATP = L-cysteinyl-tRNA(Cys) + AMP + diphosphate. This chain is Cysteine--tRNA ligase, found in Rickettsia conorii (strain ATCC VR-613 / Malish 7).